The following is a 137-amino-acid chain: Large-conductance mechanosensitive channel (137 aa).

A run of 2 helical transmembrane segments spans residues 15–35 (VDLA…TSLV) and 81–101 (GKFI…FFVI).

Belongs to the MscL family. In terms of assembly, homopentamer.

The protein localises to the cell inner membrane. Channel that opens in response to stretch forces in the membrane lipid bilayer. May participate in the regulation of osmotic pressure changes within the cell. The polypeptide is Large-conductance mechanosensitive channel (Hyphomonas neptunium (strain ATCC 15444)).